The sequence spans 662 residues: MSHVAVENALGLDQQFAGLDLNSSDNQSGGSTASKGRYIPPHLRNREATKGFYDKDSSGWSSSKDKDAYSSFGSRGDSRGKSSFFGDRGSGSRGRFDDRGRGDYDGIGGRGDRSGFGKFERGGNSRWCDKSDEDDWSKPLPPSERLEQELFSGGNTGINFEKYDDIPVEATGNNCPPHIESFSDVEMGEIIMGNIELTRYTRPTPVQKHAIPIIKEKRDLMACAQTGSGKTAAFLLPILSQIYADGPGEALRAMKENGRYGRRKQYPISLVLAPTRELAVQIYEEARKFSYRSRVRPCVVYGGAEIGQQIRDLERGCHLLVATPGRLVDMMERGKIGLDFCKYLVLDEADRMLDMGFEPQIRRIVEQDTMPPKGVRHTMMFSATFPKEIQMLARDFLDEYIFLAVGRVGSTSENITQKVVWVEEIDKRSFLLDLLNATGKDSLTLVFVETKKGADSLEDFLYHEGYACTSIHGDRSQRDREEALHQFRSGKSPILVATAVAARGLDISNVKHVINFDLPSDIEEYVHRIGRTGRVGNLGLATSFFNERNINITKDLLDLLVEAKQEVPSWLENMAFEHHYKGSSRGRSKSSRFSGGFGARDYRQSSGASSSSFSSSRASSSRSGGGGHGGSRGFGGGGYGGFYNSDGYGGNYNSQGVDWWGN.

N-acetylserine is present on Ser2. Residues 2–139 form a required for TBK1 and IKBKE-dependent IFNB1 activation region; it reads SHVAVENALG…KSDEDDWSKP (138 aa). Positions 12 to 21 match the Nuclear export signal motif; sequence LDQQFAGLDL. The tract at residues 19-144 is disordered; it reads LDLNSSDNQS…DWSKPLPPSE (126 aa). The segment covering 21 to 34 has biased composition (polar residues); sequence LNSSDNQSGGSTAS. The segment at 38 to 44 is interaction with EIF4E; it reads YIPPHLR. The span at 44–68 shows a compositional bias: basic and acidic residues; sequence RNREATKGFYDKDSSGWSSSKDKDA. Lys55 bears the N6-acetyllysine mark. Phosphoserine is present on residues Ser82 and Ser90. Residues 94 to 130 are compositionally biased toward basic and acidic residues; that stretch reads GRFDDRGRGDYDGIGGRGDRSGFGKFERGGNSRWCDK. Residues 100-110 are interaction with IKBKE; sequence GRGDYDGIGGR. Residues 100-662 are interaction with GSK3B; it reads GRGDYDGIGG…NSQGVDWWGN (563 aa). Position 101 is an omega-N-methylarginine (Arg101). At Tyr104 the chain carries Phosphotyrosine. Arg110 is modified (omega-N-methylarginine). Residue Lys118 is modified to N6-acetyllysine. Ser131 is modified (phosphoserine). An interaction with CHUK region spans residues 139-172; the sequence is PLPPSERLEQELFSGGNTGINFEKYDDIPVEATG. A Q motif motif is present at residues 180–208; it reads ESFSDVEMGEIIMGNIELTRYTRPTPVQK. Ser183 carries the post-translational modification Phosphoserine. Residue 200–207 coordinates ATP; it reads YTRPTPVQ. The 193-residue stretch at 211–403 folds into the Helicase ATP-binding domain; that stretch reads IPIIKEKRDL…RDFLDEYIFL (193 aa). Lys215 is covalently cross-linked (Glycyl lysine isopeptide (Lys-Gly) (interchain with G-Cter in SUMO2)). 224–231 serves as a coordination point for ATP; that stretch reads AQTGSGKT. The involved in stimulation of ATPase activity by DNA and RNA, nucleic acid binding and unwinding stretch occupies residues 250 to 259; it reads ALRAMKENGR. A DEAD box motif is present at residues 347–350; it reads DEAD. Residues 414–575 form the Helicase C-terminal domain; the sequence is NITQKVVWVE…EVPSWLENMA (162 aa). Ser456 is subject to Phosphoserine. Residues 536–661 are interaction with NXF1; sequence GNLGLATSFF…YNSQGVDWWG (126 aa). Arg592 carries the post-translational modification Omega-N-methylarginine. A phosphoserine mark is found at Ser594, Ser605, and Ser612. The interval 601–633 is disordered; that stretch reads DYRQSSGASSSSFSSSRASSSRSGGGGHGGSRG. Over residues 604 to 622 the composition is skewed to low complexity; the sequence is QSSGASSSSFSSSRASSSR. Arg617 and Arg632 each carry omega-N-methylarginine. The span at 623-633 shows a compositional bias: gly residues; sequence SGGGGHGGSRG.

The protein belongs to the DEAD box helicase family. DDX3/DED1 subfamily. As to quaternary structure, homodimer; can bind RNA as a monomer and as a dimer/oligomer. Interacts with TDRD3. When phosphorylated, interacts with IRF3; the interaction facilitates the phosphorylation and activation of IRF3 by IKBKE. Directly interacts with XPO1/CRM1. The interaction with XPO1/CMR1 is dependent on the DDX3X nuclear export signal motif and XPO1 interaction with GTPase RAN in its active GTP-bound form. Weakly interacts with TBKBP1/SINTBAD. Directly interacts with TRAF3; this interaction stimulates TRAF3 'Lys-63' ubiquitination. Interacts with CSNK1E in a Wnt-dependent manner; this interaction greatly enhances CSNK1E affinity for ATP, stimulates its kinase activity and promotes CSNK1E-mediated DVL2 phosphorylation. In the presence of RNA, the interaction is decreased. Also interacts with CSNK1D and stimulates its kinase activity. Interacts with TRPV4; this interaction is decreased when the TRPV4 channel is activated, leading to DDX3X relocalization to the nucleus. Interacts with MAP3K14/NIK. Directly interacts with CHUK/IKKA after physiological activation of the TLR7 and TLR8 pathways; this interaction enhances CHUK autophosphorylation. May associate with EIF4F complex, composed of at least EIF4A, EIF4E and EIF4G1/EIF4G3. Directly interacts with EIF4E in an RNA-independent manner; this interaction enhances EIF4E cap-binding ability. Directly interacts with EIF4G1 in an RNA-independent manner. DDX3X competes with EIF4G1 for interaction with EIF4E. Interacts with EIF4A1 and EIF2S1 in an RNA-independent manner. Associates with the eukaryotic translation initiation factor 3 (eIF-3) complex, including with EIF3B and EIF3C subunits. Directly interacts with IKBKE/IKKE; this interaction stimulates IKBKE activating autophosphorylation and is induced upon viral infection. Interacts with TBK1. Interacts with SP1; this interaction potentiates SP1-induced CDKN1A/WAF1/CIP1 transcription. Interacts with GSK3A and GSK3B. Interacts with several death receptors, inclusing FAS, TNFRSF10A and TNFRSF10B. Recruited to TNFRSF10B in the absence of receptor stimulation. When TNFRSF10B is stimulated, further recruited to the receptor and cleaved by caspases. A large proteolytic fragment remains associated with TNFRSF10B. Interacts (via C-terminus) with NXF1/TAP; this interaction may be partly involved in DDX3X nuclear export and in NXF1 localization to stress granules. Identified in an mRNP complex, composed of at least DHX9, DDX3X, ELAVL1, HNRNPU, IGF2BP1/2, ILF3, PABPC1, PCBP2, PTBP2, STAU1, STAU2, SYNCRIP and YBX1. The interaction with IGF2BP1/2 is RNA-dependent. Directly interacts with PABPC1/PABP1 in an RNA-independent manner. This interaction increases in stressed cells and decreases during cell recovery. Interacts (via C-terminus) with MAVS/IPS-1; this interaction potentiates MAVS-mediated IFNB induction. Interacts with ERCC6/CBS. Interacts with DHX33 in an RNA-independent manner. Interacts with DDX5 in the cytoplasm; this interaction may be more efficient when both proteins are unphosphorylated. Interacts with RIGI. Interacts with IFIH1/MDA5. Interacts with NCAPH; this interaction may be important for the NCAPH localization at condensing chromosomes during mitosis. Interacts with NLRP3 (via NACHT domain) under inflammasome-activating conditions. Interacts with CAPRIN1. Interacts with HNF4A and NR0B2/SHP in an RNA-independent manner; this interaction disrupts the interaction between HNF4 and NR0B2 that forms inactive heterodimers and enhances the formation of active HNF4 homodimers. Interacts with CREBBP/CBP. Interacts with EP300/p300. Interacts with gamma-tubulin. Interacts with phosphorylated TP53. Directly interacts with RELA/p65; this interaction may trap RELA in the cytoplasm, impairing nuclear relocalization upon TNF activating signals. Post-translationally, phosphorylated by TBK1; the phosphorylation is required for the synergistic induction of IFNB mediated by TBK1 and DDX3X. Phosphorylated by IKBKE. Also phosphorylated by CSNK1E; this phosphorylation may inhibit RNA-stimulated ATPase activity. Upon stimulation of death receptors, including TNFRSF10B, recruited to receptors and cleaved by caspases. Proteolytic fragments remain associated with the receptors. This cleavage presumably inactivates DDX3X anti-apoptotic function. In terms of processing, ubiquitinated by RNF39 via 'Lys-48'-linked ubiquitination; leading to proteasomal degradation. Expressed in ovary, including in germinal vesicle immature and metaphase II (MII) stage oocytes (at protein level). In the brain, expressed in the granule cells of the cerebellum and dentate gyrus, the pyramidal cells of the hippocampus, the ependymal cells lining the ventricles, choroid plexi and olfactory bulb. Also accumulates in the thalamic nuclei, the dorsal region of the colliculi and the pontine nucleus.

Its subcellular location is the cell membrane. It localises to the nucleus. It is found in the cytoplasm. The protein localises to the stress granule. The protein resides in the inflammasome. Its subcellular location is the cell projection. It localises to the lamellipodium. It catalyses the reaction ATP + H2O = ADP + phosphate + H(+). In terms of biological role, multifunctional ATP-dependent RNA helicase. The ATPase activity can be stimulated by various ribo-and deoxynucleic acids indicative for a relaxed substrate specificity. In vitro can unwind partially double-stranded DNA with a preference for 5'-single-stranded DNA overhangs. Binds RNA G-quadruplex (rG4s) structures, including those located in the 5'-UTR of NRAS mRNA. Involved in many cellular processes, which do not necessarily require its ATPase/helicase catalytic activities. Involved in transcription regulation. Positively regulates CDKN1A/WAF1/CIP1 transcription in an SP1-dependent manner, hence inhibits cell growth. This function requires its ATPase, but not helicase activity. CDKN1A up-regulation may be cell-type specific. Binds CDH1/E-cadherin promoter and represses its transcription. Potentiates HNF4A-mediated MTTP transcriptional activation; this function requires ATPase, but not helicase activity. Facilitates HNF4A acetylation, possibly catalyzed by CREBBP/EP300, thereby increasing the DNA-binding affinity of HNF4 to its response element. In addition, disrupts the interaction between HNF4 and SHP that forms inactive heterodimers and enhances the formation of active HNF4 homodimers. By promoting HNF4A-induced MTTP expression, may play a role in lipid homeostasis. May positively regulate TP53 transcription. Associates with mRNPs, predominantly with spliced mRNAs carrying an exon junction complex (EJC). Involved in the regulation of translation initiation. Not involved in the general process of translation, but promotes efficient translation of selected complex mRNAs, containing highly structured 5'-untranslated regions (UTR). This function depends on helicase activity. Might facilitate translation by resolving secondary structures of 5'-UTRs during ribosome scanning. Alternatively, may act prior to 43S ribosomal scanning and promote 43S pre-initiation complex entry to mRNAs exhibiting specific RNA motifs, by performing local remodeling of transcript structures located close to the cap moiety. Independently of its ATPase activity, promotes the assembly of functional 80S ribosomes and disassembles from ribosomes prior to the translation elongation process. Positively regulates the translation of cyclin E1/CCNE1 mRNA and consequently promotes G1/S-phase transition during the cell cycle. May activate TP53 translation. Required for endoplasmic reticulum stress-induced ATF4 mRNA translation. Independently of its ATPase/helicase activity, enhances IRES-mediated translation; this activity requires interaction with EIF4E. Independently of its ATPase/helicase activity, has also been shown specifically repress cap-dependent translation, possibly by acting on translation initiation factor EIF4E. Involved in innate immunity, acting as a viral RNA sensor. Binds viral RNAs and promotes the production of type I interferon (IFN-alpha and IFN-beta). Potentiate MAVS/RIGI-mediated induction of IFNB in early stages of infection. Enhances IFNB1 expression via IRF3/IRF7 pathway and participates in NFKB activation in the presence of MAVS and TBK1. Involved in TBK1 and IKBKE-dependent IRF3 activation leading to IFNB induction, acts as a scaffolding adapter that links IKBKE and IRF3 and coordinates their activation. Involved in the TLR7/TLR8 signaling pathway leading to type I interferon induction, including IFNA4 production. In this context, acts as an upstream regulator of IRF7 activation by MAP3K14/NIK and CHUK/IKKA. Stimulates CHUK autophosphorylation and activation following physiological activation of the TLR7 and TLR8 pathways, leading to MAP3K14/CHUK-mediated activatory phosphorylation of IRF7. Also stimulates MAP3K14/CHUK-dependent NF-kappa-B signaling. Negatively regulates TNF-induced IL6 and IL8 expression, via the NF-kappa-B pathway. May act by interacting with RELA/p65 and trapping it in the cytoplasm. May also bind IFNB promoter; the function is independent of IRF3. Involved in both stress and inflammatory responses. Independently of its ATPase/helicase activity, required for efficient stress granule assembly through its interaction with EIF4E, hence promotes survival in stressed cells. Independently of its helicase activity, regulates NLRP3 inflammasome assembly through interaction with NLRP3 and hence promotes cell death by pyroptosis during inflammation. This function is independent of helicase activity. Therefore DDX3X availability may be used to interpret stress signals and choose between pro-survival stress granules and pyroptotic NLRP3 inflammasomes and serve as a live-or-die checkpoint in stressed cells. In association with GSK3A/B, negatively regulates extrinsic apoptotic signaling pathway via death domain receptors, including TNFRSF10B, slowing down the rate of CASP3 activation following death receptor stimulation. Cleavage by caspases may inactivate DDX3X and relieve the inhibition. Independently of its ATPase/helicase activity, allosteric activator of CSNK1E. Stimulates CSNK1E-mediated phosphorylation of DVL2, thereby involved in the positive regulation of Wnt/beta-catenin signaling pathway. Also activates CSNK1A1 and CSNK1D in vitro, but it is uncertain if these targets are physiologically relevant. ATPase and casein kinase-activating functions are mutually exclusive. May be involved in mitotic chromosome segregation. This is ATP-dependent RNA helicase DDX3X (Ddx3x) from Mus musculus (Mouse).